A 434-amino-acid chain; its full sequence is UDP-N-acetylenolpyruvoylglucosamine reductase (434 aa).

Residues 51-238 form the FAD-binding PCMH-type domain; it reads IGAAPAGVVE…TAVEFQLTTD (188 aa). Residue Arg216 is part of the active site. The active-site Proton donor is the Ser299. Residue Glu425 is part of the active site.

This sequence belongs to the MurB family. FAD serves as cofactor.

Its subcellular location is the cytoplasm. The enzyme catalyses UDP-N-acetyl-alpha-D-muramate + NADP(+) = UDP-N-acetyl-3-O-(1-carboxyvinyl)-alpha-D-glucosamine + NADPH + H(+). Its pathway is cell wall biogenesis; peptidoglycan biosynthesis. Functionally, cell wall formation. The polypeptide is UDP-N-acetylenolpyruvoylglucosamine reductase (Corynebacterium jeikeium (strain K411)).